We begin with the raw amino-acid sequence, 2590 residues long: DNA polymerase theta (2590 aa).

Basic residues predominate over residues 1 to 12 (MNLLRRSGKRRR). The segment at 1 to 33 (MNLLRRSGKRRRSESGSDSFSGSGGDSSASPQF) is disordered. Positions 16-30 (GSDSFSGSGGDSSAS) are enriched in low complexity. ATP is bound by residues Gln96 and 115-122 (APTSAGKT). A Helicase ATP-binding domain is found at 102–286 (LGQVLEGKNL…WLNAELYHTD (185 aa)). The tract at residues 102–554 (LGQVLEGKNL…STSQDMHTYA (453 aa)) is helicase activity. The short motif at 216-219 (DELH) is the DEAH box element. A Helicase C-terminal domain is found at 321–554 (GDEDHVVSLC…STSQDMHTYA (234 aa)). The interaction with RAD51 stretch occupies residues 847–894 (DEEEEAVEERRNMRTIWVTGRKGLTEREAAALIVEEARMILQQDLVEM). Lys990 is subject to N6-acetyllysine. A disordered region spans residues 1034–1060 (KMSRSFRSWKRRKHLKRSRDSSPLKDS). Residues 1040–1050 (RSWKRRKHLKR) show a composition bias toward basic residues. 7 positions are modified to phosphoserine; by PLK1: Ser1289, Ser1482, Ser1486, Ser1488, Ser1493, Ser1555, and Ser1563. A disordered region spans residues 1594-1622 (SDPVLDEHHQGDQDGGDQDERAEKSKLTG). Positions 1598–1619 (LDEHHQGDQDGGDQDERAEKSK) are enriched in basic and acidic residues. Ser1628 and Ser1635 each carry phosphoserine; by PLK1. Thr1755 is subject to Phosphothreonine; by PLK1. Residues 1777–1797 (PSDIKNHDLSPGSRNGFKDNS) are disordered. The interval 2097–2584 (AECESQKHIM…KVKIGASWGE (488 aa)) is DNA polymerase activity. Loop stretches follow at residues 2142–2177 (KLPP…GRQF) and 2257–2322 (EIKM…VPFP). The Mg(2+) site is built by Asp2330 and Tyr2331. The interval 2491–2535 (QLETFHSTFKSHGHREGMLQSDQTGLSRKRKLQGMFCPIRGGFFI) is loop 3. Position 2540 (Asp2540) interacts with Mg(2+).

It belongs to the DNA polymerase type-A family. In terms of assembly, homomultimer; forms homodimers and homotetramers. Interacts with RAD51. Interacts with ORC2 and ORC4. Interacts with RHNO1; interaction takes place during mitosis and promotes POLQ recruitment to DNA damage sites. Interacts (when phosphorylated) with TOPBP1 (via BRCT domains 7 and 8); promoting POLQ recruitment to DNA damage sites. Mg(2+) is required as a cofactor. In terms of processing, phosphorylated by PLK1; promoting interaction with TOPBP1 and recruitment to DNA damage sites. As to expression, highly expressed in testis.

It is found in the nucleus. The protein localises to the chromosome. It catalyses the reaction DNA(n) + a 2'-deoxyribonucleoside 5'-triphosphate = DNA(n+1) + diphosphate. It carries out the reaction ATP + H2O = ADP + phosphate + H(+). With respect to regulation, specifically inhibited by the antibiotic novobiocin. The polymerase activity is specifically inhibited by the small molecule ART558. Novobiocin and ART558 confer specific killing of BRCA1/2-deficient cells and synergize with the poly [ADP-ribose] polymerase (PARP) inhibitor olaparib. Its function is as follows. Low-fidelity DNA polymerase with a helicase activity that promotes microhomology-mediated end-joining (MMEJ), an alternative non-homologous end-joining (NHEJ) machinery required to repair double-strand breaks in DNA during mitosis. MMEJ is an error-prone repair pathway that produces deletions of sequences from the strand being repaired and promotes genomic rearrangements, such as telomere fusions, some of them leading to cellular transformation. MMEJ is required during mitosis to repair persistent double-strand breaks that originate in S-phase. Although error-prone, MMEJ protects against chromosomal instability and tumorigenesis. The polymerase acts by binding directly the 2 ends of resected double-strand breaks, allowing microhomologous sequences in the overhangs to form base pairs. It then extends each strand from the base-paired region using the opposing overhang as a template. Requires partially resected DNA containing 2 to 6 base pairs of microhomology to perform MMEJ. The polymerase lacks proofreading activity and is highly promiscuous: unlike most polymerases, promotes extension of ssDNA and partial ssDNA (pssDNA) substrates. When the ends of a break do not contain terminal microhomology must identify embedded complementary sequences through a scanning step. Also acts as a DNA helicase, promoting dissociation of the replication protein A complex (RPA/RP-A), composed of RPA1, RPA2 and RPA3, from resected double-strand breaks to allow their annealing and subsequent joining by MMEJ. Removal of RPA/RP-A complex proteins prevents RAD51 accumulation at resected ends, thereby inhibiting homology-recombination repair (HR) pathway. Also shows RNA-directed DNA polymerase activity to mediate DNA repair in vitro; however this activity needs additional evidence in vivo. May also have lyase activity. Involved in somatic hypermutation of immunoglobulin genes, a process that requires the activity of DNA polymerases to ultimately introduce mutations at both A/T and C/G base pairs. POLQ-mediated end joining activity is involved in random integration of exogenous DNA hampers. The sequence is that of DNA polymerase theta from Homo sapiens (Human).